Reading from the N-terminus, the 72-residue chain is Translation initiation factor IF-1 (72 aa).

An S1-like domain is found at 1-72 (MAKEELLEFP…TKGRINYRFK (72 aa)).

Belongs to the IF-1 family. In terms of assembly, component of the 30S ribosomal translation pre-initiation complex which assembles on the 30S ribosome in the order IF-2 and IF-3, IF-1 and N-formylmethionyl-tRNA(fMet); mRNA recruitment can occur at any time during PIC assembly.

The protein resides in the cytoplasm. In terms of biological role, one of the essential components for the initiation of protein synthesis. Stabilizes the binding of IF-2 and IF-3 on the 30S subunit to which N-formylmethionyl-tRNA(fMet) subsequently binds. Helps modulate mRNA selection, yielding the 30S pre-initiation complex (PIC). Upon addition of the 50S ribosomal subunit IF-1, IF-2 and IF-3 are released leaving the mature 70S translation initiation complex. This Dinoroseobacter shibae (strain DSM 16493 / NCIMB 14021 / DFL 12) protein is Translation initiation factor IF-1.